The sequence spans 392 residues: Ceramide phosphoethanolamine synthase (392 aa).

Over 1-10 (MIGPSSQISK) the chain is Lumenal. Residues 11–31 (ILLTLLFLLIIFYVFMDVELY) traverse the membrane as a helical segment. Residues 32–140 (LRIHNYAIER…MFDNVIGFSR (109 aa)) are Cytoplasmic-facing. Residues 59 to 82 (SESGSGSIGGSSSSSSSSSSSTST) show a composition bias toward low complexity. A disordered region spans residues 59 to 91 (SESGSGSIGGSSSSSSSSSSSTSTKLPTAGDRQ). The chain crosses the membrane as a helical span at residues 141–161 (STFITPNMISFFHVGVACLAG). The Lumenal portion of the chain corresponds to 162–212 (KLVASDSLGYRRLGVLLFQIRTFLDDLDGHVARVRKHIRGERSEIGTSGYY). A helical transmembrane segment spans residues 213–233 (VDGLCDGLGCIALLLGIFFYL). Residues 234 to 271 (KNNPPRRGYSIIPMSDSKLPEPTMMIPKMKATTRKVAK) lie on the Cytoplasmic side of the membrane. Residues 272 to 288 (NVISFTGQLLLSSTAWN) form a helical membrane-spanning segment. The Lumenal portion of the chain corresponds to 289 to 319 (RYIAVYQNMLEREDVSGNQSHCQDYVFKSTW). Residues 320 to 340 (FFCVAWMWRIVNVHALLHCVL) form a helical membrane-spanning segment. Topologically, residues 341–356 (LSIFCDKLWDFLRAIR) are cytoplasmic. Residues 357 to 377 (YSGYIILLVAICLTEMHILEA) form a helical membrane-spanning segment. The Lumenal segment spans residues 378–392 (QNYIFNSTACSNISL).

Belongs to the CDP-alcohol phosphatidyltransferase class-I family. It depends on Mn(2+) as a cofactor.

It is found in the membrane. The protein localises to the golgi apparatus membrane. Its subcellular location is the cell membrane. The catalysed reaction is CDP-ethanolamine + an N-acylsphing-4-enine = an N-acylsphing-4-enine 1-phosphoethanolamine + CMP + H(+). It carries out the reaction CDP-ethanolamine + an N-acyl-sphingoid base = an N-acyl-sphingoid 1-phosphoethanolamine + CMP + H(+). Catalyzes the biosynthesis of ceramide phosphoethanolamine (CPE) through the transfer of a phosphatidyl head group from cytidine 5'-diphosphate (CDP)-ethanolamine on to the primary hydroxyl of ceramide. The sequence is that of Ceramide phosphoethanolamine synthase from Drosophila melanogaster (Fruit fly).